Reading from the N-terminus, the 566-residue chain is Folate-like transporter DDB_G0272544 (566 aa).

Positions 24-81 form a coiled coil; the sequence is RNQDEDENENENNDNLENDNNKRNYISINNYEPYKEIDNNNNKNNNNNNIINNNNKIN. Residues 25 to 46 form a disordered region; it reads NQDEDENENENNDNLENDNNKR. Positions 27-40 are enriched in acidic residues; the sequence is DEDENENENNDNLE. Transmembrane regions (helical) follow at residues 148-168, 171-191, 194-214, 226-246, 252-272, 304-324, 332-352, 364-384, 388-408, 420-440, and 458-478; these read VFLLIFGILGEIIGYKVIIII, VAKILTIGVLLSTNNIIWMIL, ITEGLSYSAYTVFLAYIYFSL, VNAGYLVGIVSSGLLGQLLVE, VYLLSIACGTNILALILALGF, IWSGIAISIHQIVITYWQNLF, SWNGYISASAYFFASFFAIIP, GIILVLFGLLGGGLLVLMGFG, VVSALSFIIYNCCFEFVSPIV, IGVLFSFNIMVALTIQVLVQS, and YGACLFFLSFGFAILFGFLFL. The stretch at 517–544 forms a coiled coil; the sequence is YNANIIDFENNNNNNNNNNNNNNNNNNN. A compositionally biased stretch (low complexity) spans 526 to 556; sequence NNNNNNNNNNNNNNNNNNNNNNNNNNNNNNN. Residues 526–566 are disordered; sequence NNNNNNNNNNNNNNNNNNNNNNNNNNNNNNNVGIGGNDNFK.

Belongs to the reduced folate carrier (RFC) transporter (TC 2.A.48) family.

The protein resides in the membrane. Folate transporter. The sequence is that of Folate-like transporter DDB_G0272544 from Dictyostelium discoideum (Social amoeba).